The following is a 248-amino-acid chain: B-box zinc finger protein 24 (248 aa).

The Zn(2+) site is built by Cys5, Cys8, Cys28, His33, Cys57, Cys60, Cys80, and His85. A B box-type 1; atypical zinc finger spans residues 5-47 (CDVCEKAPATVICCADEAALCPQCDIEIHAANKLASKHQRLHL). The B box-type 2; atypical zinc-finger motif lies at 57-99 (CDICQEKAAFIFCVEDRALLCRDCDESIHVANSRSANHQRFLA). The tract at residues 115 to 148 (IEKNQPEPSNNQQKANQIPAKSTSQQQQQPSSAT) is disordered. A compositionally biased stretch (polar residues) spans 120–130 (PEPSNNQQKAN). Residues 131 to 148 (QIPAKSTSQQQQQPSSAT) are compositionally biased toward low complexity. The Nuclear localization signal signature appears at 226-229 (KKPR). An interaction with COP1 region spans residues 236–248 (DDDEEHFIVPDLG).

In terms of assembly, interacts with COP1 WD40 domain. Interacts with HY5 and HYH. Interacts with RCD1 and TRP4. Post-translationally, COP1-mediated ubiquitination and subsequent proteasomal degradation of BBX24/STO occurs in the dark. In terms of tissue distribution, high expression in leaves and lower in roots and flowers.

It localises to the nucleus. Functionally, acts as a negative regulator of seedling photomorphogenesis and light-regulated inhibition of hypocotyl elongation. BBX24/STO and BBX25/STH function as transcriptional corepressors of HY5 activity, leading to the down-regulation of BBX22 expression. BBX24/STO acts additively with BBX25/STH during de-etiolation and the hypocotyl shade avoidance response. Functions as a negative regulator of photomorphogenic UV-B responses by interacting with both COP1 and HY5. May act as a transcription factor in the salt-stress response. This Arabidopsis thaliana (Mouse-ear cress) protein is B-box zinc finger protein 24.